An 870-amino-acid chain; its full sequence is MNHLNVLAKALYDNVAESPDELSFRKGDIMTVLEQDTQGLDGWWLCSLHGRQGIVPGNRLKILVGMYDKKPAGPGPGPPATPAQPQPGLHAPAPPASQYTPMLPNTYQPQPDSVYLVPTPSKAQQGLYQVPGPSPQFQSPPAKQTSTFSKQTPHHPFPSPATDLYQVPPGPGGPAQDIYQVPPSAGMGHDIYQVPPSMDTRSWEGTKPPAKVVVPTRVGQGYVYEAAQPEQDEYDIPRHLLAPGPQDIYDVPPVRGLLPSQYGQEVYDTPPMAVKGPNGRDPLLEVYDVPPSVEKGLPPSNHHAVYDVPPSVSKDVPDGPLLREETYDVPPAFAKAKPFDPARTPLVLAAPPPDSPPAEDVYDVPPPAPDLYDVPPGLRRPGPGTLYDVPRERVLPPEVADGGVVDSGVYAVPPPAEREAPAEGKRLSASSTGSTRSSQSASSLEVAGPGREPLELEVAVEALARLQQGVSATVAHLLDLAGSAGATGSWRSPSEPQEPLVQDLQAAVAAVQSAVHELLEFARSAVGNAAHTSDRALHAKLSRQLQKMEDVHQTLVAHGQALDAGRGGSGATLEDLDRLVACSRAVPEDAKQLASFLHGNASLLFRRTKATAPGPEGGGTLHPNPTDKTSSIQSRPLPSPPKFTSQDSPDGQYENSEGGWMEDYDYVHLQGKEEFEKTQKELLEKGSITRQGKSQLELQQLKQFERLEQEVSRPIDHDLANWTPAQPLAPGRTGGLGPSDRQLLLFYLEQCEANLTTLTNAVDAFFTAVATNQPPKIFVAHSKFVILSAHKLVFIGDTLSRQAKAADVRSQVTHYSNLLCDLLRGIVATTKAAALQYPSPSAAQDMVERVKELGHSTQQFRRVLGQLAAA.

Methionine 1 is modified (N-acetylmethionine). The SH3 domain occupies 3–65 (HLNVLAKALY…PGNRLKILVG (63 aa)). A disordered region spans residues 70–156 (KPAGPGPGPP…TFSKQTPHHP (87 aa)). Residues 73 to 85 (GPGPGPPATPAQP) are compositionally biased toward pro residues. The span at 97-111 (SQYTPMLPNTYQPQP) shows a compositional bias: polar residues. The tract at residues 115–416 (YLVPTPSKAQ…SGVYAVPPPA (302 aa)) is substrate for kinases. Residue tyrosine 128 is modified to Phosphotyrosine; by SRC. Residues serine 134 and serine 139 each carry the phosphoserine modification. Residues 135–151 (PQFQSPPAKQTSTFSKQ) are compositionally biased toward polar residues. At tyrosine 234 the chain carries Phosphotyrosine. The residue at position 249 (tyrosine 249) is a Phosphotyrosine; by ABL1. Position 269 is a phosphothreonine (threonine 269). Residue serine 292 is modified to Phosphoserine. A phosphotyrosine mark is found at tyrosine 362, tyrosine 372, and tyrosine 410. 3 disordered regions span residues 411-449 (AVPPPAEREAPAEGKRLSASSTGSTRSSQSASSLEVAGP), 609-658 (KATA…NSEG), and 715-734 (IDHDLANWTPAQPLAPGRTG). The segment covering 416 to 426 (AEREAPAEGKR) has biased composition (basic and acidic residues). Residues 427–444 (LSASSTGSTRSSQSASSL) are compositionally biased toward low complexity. 3 positions are modified to phosphoserine: serine 428, serine 437, and serine 639. Positions 626 to 655 (TDKTSSIQSRPLPSPPKFTSQDSPDGQYEN) are enriched in polar residues. Residues 635–643 (RPLPSPPKF) carry the SH3-binding motif. The interval 746–796 (FYLEQCEANLTTLTNAVDAFFTAVATNQPPKIFVAHSKFVILSAHKLVFIG) is divergent helix-loop-helix motif.

This sequence belongs to the CAS family. Forms complexes in vivo with PTK2/FAK1, adapter protein CRKL and LYN kinase. Heterodimerizes with NEDD9. Component of a complex comprised of SH2D3C, BCAR1/CAS, and CRK. Within the complex, interacts with SH2D3C (via C-terminus), and CRK. Part of a complex comprised of PTPRA, BCAR1, BCAR3 (via SH2 domain) and SRC; the formation of the complex is dependent on integrin mediated-tyrosine phosphorylation of PTPRA. Interacts with BCAR3 (via Ras-GEF domain); the interaction regulates adhesion-dependent serine phosphorylation. Interacts with SMAD2 and SMAD3. Interacts with NPHP1. Interacts with PTK2B/PYK2. Interacts (via C-terminus) with SH2D3C/CHAT isoform 2 (via C-terminus). Interacts with activated CSPG4. Interacts with BMX, INPPL1/SHIP2 and PEAK1. Part of a collagen-stimulated complex involved in cell migration made of CDC42, CRK, TNK2 and BCAR1/p130cas. Interacts with TNK2 via SH3 domains. Interacts (when tyrosine-phosphorylated) with tensin TNS1; the interaction is increased by phosphorylation of TNS1. PTK2/FAK1 activation mediates phosphorylation at the YDYVHL motif; phosphorylation is most likely catalyzed by SRC family members. SRC-family kinases are recruited to the phosphorylated sites and can phosphorylate other tyrosine residues. Tyrosine phosphorylation is triggered by integrin-mediated adhesion of cells to the extracellular matrix. In terms of processing, dephosphorylated by PTPN14 at Tyr-128. Post-translationally, phosphorylated by SRC kinase in a EDN1- and PTK2B-mediated manner; phosphorylation strengthens its interaction with BCAR3 as part of the PTK2B/BCAR1/BCAR3/RAP1 signaling pathway. Expressed in B-cells (at protein level). Widely expressed with an abundant expression in the testis. Low level of expression seen in the liver, thymus, and peripheral blood leukocytes.

It is found in the cell junction. The protein resides in the focal adhesion. Its subcellular location is the cytoplasm. It localises to the cell projection. The protein localises to the axon. In terms of biological role, docking protein which plays a central coordinating role for tyrosine kinase-based signaling related to cell adhesion. Implicated in induction of cell migration and cell branching. Involved in the BCAR3-mediated inhibition of TGFB signaling. The chain is Breast cancer anti-estrogen resistance protein 1 (BCAR1) from Homo sapiens (Human).